The chain runs to 811 residues: Endothelin-converting enzyme 2 (811 aa).

The Cytoplasmic segment spans residues 1–106 (MNVALQELGA…QLLGSRTQLE (106 aa)). A disordered region spans residues 22–64 (LRDEDAPETPVEGGASPDAMEVGKGASPFSPGPSPGMTPGTPR). Residues 107-127 (LVLAGASLLLAALLLGCLVAL) form a helical; Signal-anchor for type II membrane protein membrane-spanning segment. Residues 128-811 (GVQYHRDPSH…MNPGQLCEVW (684 aa)) are Lumenal-facing. The Peptidase M13 domain occupies 139–811 (TCLTEACIRV…MNPGQLCEVW (673 aa)). Intrachain disulfides connect C140–C145, C163–C796, C171–C756, C227–C476, and C685–C808. N-linked (GlcNAc...) asparagine glycans are attached at residues N207, N211, N252, N312, N357, N424, and N580. Position 648 (H648) interacts with Zn(2+). The active site involves E649. Residue H652 participates in Zn(2+) binding. 2 N-linked (GlcNAc...) asparagine glycosylation sites follow: N673 and N681. E708 serves as a coordination point for Zn(2+). The active-site Proton donor is D712.

This sequence belongs to the peptidase M13 family. The cofactor is Zn(2+).

Its subcellular location is the golgi apparatus membrane. The protein resides in the cytoplasmic vesicle. It is found in the secretory vesicle membrane. The enzyme catalyses Hydrolysis of the 21-Trp-|-Val-22 bond in big endothelin to form endothelin 1.. In terms of biological role, converts big endothelin-1 to endothelin-1. Also involved in the processing of various neuroendocrine peptides, including neurotensin, angiotensin I, substance P, proenkephalin-derived peptides, and prodynorphin-derived peptides. May play a role in amyloid-beta processing. The protein is Endothelin-converting enzyme 2 of Homo sapiens (Human).